Reading from the N-terminus, the 157-residue chain is E3 ubiquitin-protein ligase RHA1B (157 aa).

An RING-type; atypical zinc finger spans residues 85 to 129; the sequence is CTVCLSDFVSDDKIRQLPKCGHVFHHRCLDRWIVDCNKITCPICR.

It carries out the reaction S-ubiquitinyl-[E2 ubiquitin-conjugating enzyme]-L-cysteine + [acceptor protein]-L-lysine = [E2 ubiquitin-conjugating enzyme]-L-cysteine + N(6)-ubiquitinyl-[acceptor protein]-L-lysine.. The protein operates within protein modification; protein ubiquitination. Functionally, possesses E3 ubiquitin-protein ligase activity when associated with the E2 enzyme UBC8 in vitro. The sequence is that of E3 ubiquitin-protein ligase RHA1B from Arabidopsis thaliana (Mouse-ear cress).